Reading from the N-terminus, the 410-residue chain is Aspartic proteinase Asp1 (410 aa).

The N-terminal stretch at M1–A23 is a signal peptide. A propeptide spans V24–D46 (removed in mature form). The region spanning F38–V392 is the Peptidase A1 domain. Residues D56 and D257 contribute to the active site.

The protein belongs to the peptidase A1 family.

The protein is Aspartic proteinase Asp1 (ASP1) of Oryza sativa subsp. japonica (Rice).